Reading from the N-terminus, the 366-residue chain is Fructose-bisphosphate aldolase 1 (366 aa).

2 residues coordinate substrate: Arg56 and Lys147. Glu189 functions as the Proton acceptor in the catalytic mechanism. Residue Lys231 is the Schiff-base intermediate with dihydroxyacetone-P of the active site.

The protein belongs to the class I fructose-bisphosphate aldolase family. Ubiquitous.

It carries out the reaction beta-D-fructose 1,6-bisphosphate = D-glyceraldehyde 3-phosphate + dihydroxyacetone phosphate. It functions in the pathway carbohydrate degradation; glycolysis; D-glyceraldehyde 3-phosphate and glycerone phosphate from D-glucose: step 4/4. In terms of biological role, may be involved in the metabolism of fructose-bisphosphate (beta-D-fructose 1,6-bisphosphate) and of fructose 1-phosphate. This is Fructose-bisphosphate aldolase 1 (aldo-1) from Caenorhabditis elegans.